Reading from the N-terminus, the 675-residue chain is Vitamin K-dependent protein S (675 aa).

The first 24 residues, 1 to 24, serve as a signal peptide directing secretion; that stretch reads MRVLSARFRVLLACLALVIPVSET. A propeptide spanning residues 25–41 is cleaved from the precursor; that stretch reads NFLSKERASQVLVRKRR. The 46-residue stretch at 42-87 folds into the Gla domain; sequence ANTLFEETMKGNLERECIEELCNKEEAREVFENNPETDYFYPKYLG. Glu-47, Glu-48, Glu-55, Glu-57, Glu-60, Glu-61, Glu-66, Glu-67, Glu-70, Glu-73, and Glu-77 each carry 4-carboxyglutamate. An intrachain disulfide couples Cys-58 to Cys-63. The tract at residues 88–116 is thrombin-sensitive; that stretch reads CLGAFRVGSFHAARQSANAYPDLRSCVKA. Residues 117-155 form the EGF-like 1 domain; sequence ISDQCDPIPCNEDGYLACQDGQAAFTCFCKPGWQGDRCQ. 13 cysteine pairs are disulfide-bonded: Cys-121/Cys-134, Cys-126/Cys-143, Cys-145/Cys-154, Cys-161/Cys-175, Cys-171/Cys-184, Cys-186/Cys-199, Cys-205/Cys-217, Cys-212/Cys-226, Cys-228/Cys-241, Cys-247/Cys-256, Cys-252/Cys-265, Cys-267/Cys-282, and Cys-449/Cys-475. The residue at position 136 (Asp-136) is a (3R)-3-hydroxyaspartate. Residues 157 to 200 enclose the EGF-like 2; calcium-binding domain; the sequence is DVNECKDPSNVNGGCSQICDNTPGSYHCSCKRGFAMLPNKKDCK. The region spanning 201-242 is the EGF-like 3; calcium-binding domain; it reads DLDECALKPSVCGTAVCKNIPGDFECECPDGYRYDPSSKSCK. Residues 243–283 enclose the EGF-like 4; calcium-binding domain; that stretch reads DVDECSENMCAQLCVNFPGGYSCYCDGKKGFKLAQDQKSCE. Laminin G-like domains follow at residues 299–475 and 484–665; these read LLYL…NKHC and YYPG…AHSC. Residues Asn-499 and Asn-509 are each glycosylated (N-linked (GlcNAc...) asparagine). Cys-638 and Cys-665 are joined by a disulfide.

In terms of processing, the iron and 2-oxoglutarate dependent 3-hydroxylation of aspartate and asparagine is (R) stereospecific within EGF domains. As to expression, plasma.

It localises to the secreted. Anticoagulant plasma protein; it is a cofactor to activated protein C in the degradation of coagulation factors Va and VIIIa. It helps to prevent coagulation and stimulating fibrinolysis. This chain is Vitamin K-dependent protein S (Pros1), found in Mus musculus (Mouse).